Reading from the N-terminus, the 185-residue chain is Ribosome-recycling factor (185 aa).

This sequence belongs to the RRF family.

The protein resides in the cytoplasm. Its function is as follows. Responsible for the release of ribosomes from messenger RNA at the termination of protein biosynthesis. May increase the efficiency of translation by recycling ribosomes from one round of translation to another. The protein is Ribosome-recycling factor of Alkaliphilus oremlandii (strain OhILAs) (Clostridium oremlandii (strain OhILAs)).